The chain runs to 467 residues: RuvB-like helicase 2 (467 aa).

ATP is bound at residue 73–80 (GPPSTGKT).

It belongs to the RuvB family. In terms of assembly, may form heterododecamers with RVB1. Component of the SWR1 chromatin remodeling complex, the INO80 chromatin remodeling complex, and of the R2TP complex.

The protein resides in the nucleus. The catalysed reaction is ATP + H2O = ADP + phosphate + H(+). Functionally, DNA helicase which participates in several chromatin remodeling complexes, including the SWR1 and the INO80 complexes. The SWR1 complex mediates the ATP-dependent exchange of histone H2A for the H2A variant HZT1 leading to transcriptional regulation of selected genes by chromatin remodeling. The INO80 complex remodels chromatin by shifting nucleosomes and is involved in DNA repair. Also involved in pre-rRNA processing. This chain is RuvB-like helicase 2 (RVB2), found in Kluyveromyces lactis (strain ATCC 8585 / CBS 2359 / DSM 70799 / NBRC 1267 / NRRL Y-1140 / WM37) (Yeast).